Reading from the N-terminus, the 643-residue chain is Phosphomethylpyrimidine synthase (643 aa).

Substrate contacts are provided by residues N248, M277, Y306, H342, 362 to 364, 403 to 406, and E442; these read SRG and DGLR. H446 lines the Zn(2+) pocket. Substrate is bound at residue Y469. Residue H510 participates in Zn(2+) binding. Positions 590, 593, and 598 each coordinate [4Fe-4S] cluster.

The protein belongs to the ThiC family. Homodimer. [4Fe-4S] cluster is required as a cofactor.

It catalyses the reaction 5-amino-1-(5-phospho-beta-D-ribosyl)imidazole + S-adenosyl-L-methionine = 4-amino-2-methyl-5-(phosphooxymethyl)pyrimidine + CO + 5'-deoxyadenosine + formate + L-methionine + 3 H(+). It participates in cofactor biosynthesis; thiamine diphosphate biosynthesis. Its function is as follows. Catalyzes the synthesis of the hydroxymethylpyrimidine phosphate (HMP-P) moiety of thiamine from aminoimidazole ribotide (AIR) in a radical S-adenosyl-L-methionine (SAM)-dependent reaction. The polypeptide is Phosphomethylpyrimidine synthase (Burkholderia pseudomallei (strain 1106a)).